A 53-amino-acid polypeptide reads, in one-letter code: Mannose/glucose-specific lectin alpha chain (53 aa).

The protein belongs to the leguminous lectin family. Heterodimer of an alpha and a beta chain.

Functionally, this lectin specifically binds mannose and glucose. This is Mannose/glucose-specific lectin alpha chain from Vicia cracca (Bird vetch).